An 837-amino-acid polypeptide reads, in one-letter code: GRIP1-associated protein 1 (837 aa).

Alanine 2 carries the N-acetylalanine modification. Positions 4–158 (ALSEEEFQRM…ALQERYGKEA (155 aa)) form a coiled coil. Disordered regions lie at residues 161-180 (PSAV…PISL), 555-577 (KGKE…ERDG), 647-666 (SEMN…VSSF), and 677-702 (SSAI…LSDE). A coiled-coil region spans residues 204 to 637 (EQLQGLESSK…LQEILTNSKS (434 aa)). Polar residues predominate over residues 648 to 666 (EMNSPSRTQTGDSSSVSSF). 8 positions are modified to phosphoserine: serine 651, serine 662, serine 664, serine 665, serine 684, serine 686, serine 687, and serine 688. Positions 678-690 (SAIPARSLSSSPQ) are enriched in low complexity. Coiled-coil stretches lie at residues 697–731 (AELS…LEVS) and 781–810 (DENL…KDME). Serine 826 is modified (phosphoserine).

As to quaternary structure, interacts with GRIP1, GRIP2 and AMPA receptors. Interacts (via C-terminus) with MAPK8/JNK1 and with MAP3K1/MEKK1; the interaction promotes MAP3K1-mediated phosphorylation of MAPK8. Interacts (via N-terminus) with RAB4A (in GTP-bound form). Interacts (via C-terminus) with STX12. In terms of processing, proteolytically cleaved by caspase-3. A minor C-terminal proteolytic fragment of 30 kDa is produced. Proteolytic cleavage is required for JNK signaling activation. In terms of tissue distribution, expressed in the central nervous system; especially in neurons.

It is found in the early endosome membrane. The protein resides in the recycling endosome membrane. Its subcellular location is the cell projection. The protein localises to the axon. It localises to the dendrite. It is found in the synapse. Regulates the endosomal recycling back to the neuronal plasma membrane, possibly by connecting early and late recycling endosomal domains and promoting segregation of recycling endosomes from early endosomal membranes. Involved in the localization of recycling endosomes to dendritic spines, thereby playing a role in the maintenance of dendritic spine morphology. Required for the activity-induced AMPA receptor recycling to dendrite membranes and for long-term potentiation and synaptic plasticity. Its function is as follows. Functions as a scaffold protein in neurons to facilitate MAP3K1/MEKK1-mediated activation of the JNK1 kinase by phosphorylation, possibly by bringing MAP3K1/MEKK1 and JNK1 in close proximity. In Rattus norvegicus (Rat), this protein is GRIP1-associated protein 1 (Gripap1).